Here is a 650-residue protein sequence, read N- to C-terminus: uncharacterized protein (650 aa).

This sequence belongs to the MG032/MG096/MG288 family.

This is an uncharacterized protein from Mycoplasma genitalium (strain ATCC 33530 / DSM 19775 / NCTC 10195 / G37) (Mycoplasmoides genitalium).